The sequence spans 418 residues: Voltage-gated ClC-type chloride channel ClcB (418 aa).

At 1-4 (MFRR) the chain is on the cytoplasmic side. The chain crosses the membrane as a helical span at residues 5 to 25 (LLIATVVGILAAFAVAGFRHA). The Periplasmic segment spans residues 26-53 (MLLLEWLFLNNDSGSLVNAATNLSPWRR). The helical transmembrane segment at 54–74 (LLTPALGGLAAGLLLMGWQKF) threads the bilayer. Over 75–145 (TQQRPHAPTD…QRFTPRQEWK (71 aa)) the chain is Cytoplasmic. A helical transmembrane segment spans residues 146–166 (LWIACGAAAGMAAAYRAPLAG). The Periplasmic portion of the chain corresponds to 167–177 (SLFIAEVLFGT). The helical transmembrane segment at 178–200 (MMLASLGPVIISAVVALLVSNLI) threads the bilayer. The Cytoplasmic segment spans residues 201–221 (NHSDALLYSVQLSVTVQARDY). The helical transmembrane segment at 222 to 242 (ALIISTGVLAGLCGPLLLTLM) threads the bilayer. The Periplasmic segment spans residues 243-257 (NACHRGFVSLKLAPP). Residues 258–278 (WQLALGGLIVGLLSLFTPAVW) traverse the membrane as a helical segment. Residues 279-290 (GNGYSTVQSFLT) are Cytoplasmic-facing. The helical transmembrane segment at 291–311 (APPLLMIIAGIFLCKLCAVLA) threads the bilayer. At 312 to 315 (SSGS) the chain is on the periplasmic side. The helical transmembrane segment at 316–336 (GAPGGVFTPTLFIGLAIGMLY) threads the bilayer. Residues 337–351 (GRSLGLWFPDGEEIT) are Cytoplasmic-facing. A helical membrane pass occupies residues 352-372 (LLLGLTGMATLLAATTHAPIM). Residues 373–379 (STLMICE) lie on the Periplasmic side of the membrane. The helical transmembrane segment at 380–400 (MTGEYQLLPGLLIACVIASVI) threads the bilayer. Topologically, residues 401 to 418 (SRTLHRDSIYRQHTAQHS) are cytoplasmic.

Belongs to the chloride channel (TC 2.A.49) family. ClcB subfamily.

The protein resides in the cell inner membrane. Its function is as follows. Probably acts as an electrical shunt for an outwardly-directed proton pump that is linked to amino acid decarboxylation, as part of the extreme acid resistance (XAR) response. The polypeptide is Voltage-gated ClC-type chloride channel ClcB (clcB) (Escherichia coli O157:H7).